A 208-amino-acid polypeptide reads, in one-letter code: Thymidylate kinase (208 aa).

10 to 17 (GPDGSGKT) is an ATP binding site.

Belongs to the thymidylate kinase family.

It catalyses the reaction dTMP + ATP = dTDP + ADP. Its function is as follows. Phosphorylation of dTMP to form dTDP in both de novo and salvage pathways of dTTP synthesis. The polypeptide is Thymidylate kinase (Listeria welshimeri serovar 6b (strain ATCC 35897 / DSM 20650 / CCUG 15529 / CIP 8149 / NCTC 11857 / SLCC 5334 / V8)).